A 142-amino-acid polypeptide reads, in one-letter code: Transcriptional regulator MraZ (142 aa).

SpoVT-AbrB domains are found at residues glutamate 5–serine 47 and alanine 76–arginine 119.

Belongs to the MraZ family. Forms oligomers.

The protein localises to the cytoplasm. It localises to the nucleoid. This chain is Transcriptional regulator MraZ, found in Deinococcus geothermalis (strain DSM 11300 / CIP 105573 / AG-3a).